Reading from the N-terminus, the 148-residue chain is Caltractin (148 aa).

4 consecutive EF-hand domains span residues 4-39, 40-75, 77-112, and 113-148; these read EQKQEXREAFDLFDTDGSGTIDAKELKVXMXALGFE, PKKEEIQKMISDIDKDGSGTIDFEEFLQMMTAKMGE, DSREEIMKAFRLFDDDQTGKITFKNLKRVAKELGEN, and LTDEEIQEMIDEADRDGDGEINEEEFFRIMKKTSLF. Ca(2+)-binding residues include aspartate 17, aspartate 19, serine 21, threonine 23, glutamate 28, aspartate 53, aspartate 55, serine 57, threonine 59, and glutamate 64. Ca(2+)-binding residues include aspartate 126, aspartate 128, aspartate 130, glutamate 132, and glutamate 137.

The protein belongs to the centrin family. Ubiquitous.

This calcium-binding protein is found in the basal body complexes (the functional homolog of the centrosome in animal cell). In mitotic cells it is specifically associated with the poles of the mitotic spindles at the sites of the duplicated basal body complexes. The protein is Caltractin of Spermatozopsis similis (Green alga).